Here is a 176-residue protein sequence, read N- to C-terminus: Inner membrane-spanning protein YciB (176 aa).

The next 5 membrane-spanning stretches (helical) occupy residues 22–42 (IYYA…YTWL), 50–70 (VALI…YYHN), 81–101 (IYSL…KPLI), 121–141 (IAWA…AFWL), and 149–169 (FKVF…GIYI).

Belongs to the YciB family.

Its subcellular location is the cell inner membrane. Functionally, plays a role in cell envelope biogenesis, maintenance of cell envelope integrity and membrane homeostasis. This Sodalis glossinidius (strain morsitans) protein is Inner membrane-spanning protein YciB.